Reading from the N-terminus, the 95-residue chain is Aspartyl/glutamyl-tRNA(Asn/Gln) amidotransferase subunit C (95 aa).

This sequence belongs to the GatC family. In terms of assembly, heterotrimer of A, B and C subunits.

It catalyses the reaction L-glutamyl-tRNA(Gln) + L-glutamine + ATP + H2O = L-glutaminyl-tRNA(Gln) + L-glutamate + ADP + phosphate + H(+). The enzyme catalyses L-aspartyl-tRNA(Asn) + L-glutamine + ATP + H2O = L-asparaginyl-tRNA(Asn) + L-glutamate + ADP + phosphate + 2 H(+). Allows the formation of correctly charged Asn-tRNA(Asn) or Gln-tRNA(Gln) through the transamidation of misacylated Asp-tRNA(Asn) or Glu-tRNA(Gln) in organisms which lack either or both of asparaginyl-tRNA or glutaminyl-tRNA synthetases. The reaction takes place in the presence of glutamine and ATP through an activated phospho-Asp-tRNA(Asn) or phospho-Glu-tRNA(Gln). The protein is Aspartyl/glutamyl-tRNA(Asn/Gln) amidotransferase subunit C of Nitrosomonas europaea (strain ATCC 19718 / CIP 103999 / KCTC 2705 / NBRC 14298).